We begin with the raw amino-acid sequence, 130 residues long: Phosphoribosyl-AMP cyclohydrolase (130 aa).

Position 78 (Asp78) interacts with Mg(2+). Cys79 is a Zn(2+) binding site. Asp80 and Asp82 together coordinate Mg(2+). Positions 96 and 103 each coordinate Zn(2+).

This sequence belongs to the PRA-CH family. As to quaternary structure, homodimer. The cofactor is Mg(2+). Zn(2+) is required as a cofactor.

Its subcellular location is the cytoplasm. The enzyme catalyses 1-(5-phospho-beta-D-ribosyl)-5'-AMP + H2O = 1-(5-phospho-beta-D-ribosyl)-5-[(5-phospho-beta-D-ribosylamino)methylideneamino]imidazole-4-carboxamide. The protein operates within amino-acid biosynthesis; L-histidine biosynthesis; L-histidine from 5-phospho-alpha-D-ribose 1-diphosphate: step 3/9. Catalyzes the hydrolysis of the adenine ring of phosphoribosyl-AMP. In Methylobacillus flagellatus (strain ATCC 51484 / DSM 6875 / VKM B-1610 / KT), this protein is Phosphoribosyl-AMP cyclohydrolase.